The sequence spans 701 residues: Polyribonucleotide nucleotidyltransferase (701 aa).

Positions 483 and 489 each coordinate Mg(2+). The region spanning Pro-550–Ile-609 is the KH domain. The S1 motif domain occupies Gly-619–Lys-686.

Belongs to the polyribonucleotide nucleotidyltransferase family. It depends on Mg(2+) as a cofactor.

It localises to the cytoplasm. The catalysed reaction is RNA(n+1) + phosphate = RNA(n) + a ribonucleoside 5'-diphosphate. Involved in mRNA degradation. Catalyzes the phosphorolysis of single-stranded polyribonucleotides processively in the 3'- to 5'-direction. The chain is Polyribonucleotide nucleotidyltransferase from Solibacter usitatus (strain Ellin6076).